A 309-amino-acid polypeptide reads, in one-letter code: Probable cell wall protein PGA50 (309 aa).

The signal sequence occupies residues 1–17; it reads MKLNLLLLLFIVELVAA. Asparagine 67, asparagine 115, asparagine 248, asparagine 267, and asparagine 277 each carry an N-linked (GlcNAc...) asparagine glycan. A disordered region spans residues 241-281; that stretch reads STTTFSSNGTSSGTTNGDTRAETKSSNSTQTSSSDKNSSQI. Serine 286 is lipidated: GPI-anchor amidated serine. Positions 287–309 are cleaved as a propeptide — removed in mature form; it reads TGVANFVASFGMGTLLLFVLSLC.

It belongs to the IHD1 family. In terms of processing, the GPI-anchor is attached to the protein in the endoplasmic reticulum and serves to target the protein to the cell surface. There, the glucosamine-inositol phospholipid moiety is cleaved off and the GPI-modified mannoprotein is covalently attached via its lipidless GPI glycan remnant to the 1,6-beta-glucan of the outer cell wall layer.

The protein localises to the secreted. The protein resides in the cell wall. Its subcellular location is the membrane. Functionally, probable GPI-anchored cell wall protein that may be involved in cell wall organization, hyphal growth, as well as in virulence. This is Probable cell wall protein PGA50 (PGA50) from Candida albicans (strain SC5314 / ATCC MYA-2876) (Yeast).